The following is a 384-amino-acid chain: S-adenosylmethionine synthase (384 aa).

ATP is bound at residue His-15. Asp-17 serves as a coordination point for Mg(2+). Glu-43 is a K(+) binding site. L-methionine contacts are provided by Glu-56 and Gln-99. A flexible loop region spans residues 99–109 (QSPDINQGVDR). ATP-binding positions include 164–166 (DAK), 230–231 (RF), Asp-239, 245–246 (RK), Ala-262, and Lys-266. Asp-239 is a binding site for L-methionine. Lys-270 contacts L-methionine.

This sequence belongs to the AdoMet synthase family. As to quaternary structure, homotetramer; dimer of dimers. It depends on Mg(2+) as a cofactor. Requires K(+) as cofactor.

Its subcellular location is the cytoplasm. It catalyses the reaction L-methionine + ATP + H2O = S-adenosyl-L-methionine + phosphate + diphosphate. It participates in amino-acid biosynthesis; S-adenosyl-L-methionine biosynthesis; S-adenosyl-L-methionine from L-methionine: step 1/1. Catalyzes the formation of S-adenosylmethionine (AdoMet) from methionine and ATP. The overall synthetic reaction is composed of two sequential steps, AdoMet formation and the subsequent tripolyphosphate hydrolysis which occurs prior to release of AdoMet from the enzyme. The sequence is that of S-adenosylmethionine synthase from Proteus mirabilis (strain HI4320).